A 586-amino-acid polypeptide reads, in one-letter code: Scavenger receptor cysteine-rich domain-containing group B protein (586 aa).

A disordered region spans residues 1-33 (MGPSERPSIGWTPKEAEMQIGPQPDGWSRGWKP). A signal peptide spans 1 to 58 (MGPSERPSIGWTPKEAEMQIGPQPDGWSRGWKPGDRGAVPLPLSPALSFLLLFPLASA). SRCR domains lie at 69–169 (LRLV…VLCD), 200–300 (VRLV…VLCA), 355–455 (LRLV…ALCA), and 484–584 (LRLA…VLCQ). Intrachain disulfides connect Cys94–Cys158, Cys107–Cys168, Cys138–Cys148, Cys225–Cys289, Cys238–Cys299, Cys269–Cys279, Cys380–Cys444, Cys393–Cys454, Cys424–Cys434, Cys509–Cys573, Cys522–Cys583, and Cys553–Cys563.

It localises to the secreted. This Mus musculus (Mouse) protein is Scavenger receptor cysteine-rich domain-containing group B protein.